Reading from the N-terminus, the 253-residue chain is Vacuolar v-SNARE NYV1 (253 aa).

Topologically, residues 1–231 (MKRFNVSYVE…EIMWWQKVKN (231 aa)) are cytoplasmic. The interval 147-166 (LNSSGNGQSSNGNGQNTISD) is disordered. Low complexity predominate over residues 148–162 (NSSGNGQSSNGNGQN). The region spanning 167 to 227 (IGDATEDQIK…VNIKEIMWWQ (61 aa)) is the v-SNARE coiled-coil homology domain. The helical; Anchor for type IV membrane protein transmembrane segment at 232 to 252 (ITLLTFTIILFVSAAFMFFYL) threads the bilayer. Position 253 (W253) is a topological domain, vacuolar.

It belongs to the synaptobrevin family. As to quaternary structure, present in a pentameric cis-SNARE complex composed of the v-SNAREs NYV1, VTI1 and YKT6, and the t-SNAREs VAM3 and VAM7 on vacuolar membranes. Interacts in trans with the cognate t-SNARE VAM3 during the docking step of homotypic vacuolar fusion. Interacts with the vacuolar transporter chaperone (VTC) complex and the vacuolar Ca(2+)-ATPase PMC1.

Its subcellular location is the vacuole membrane. In terms of biological role, vacuolar v-SNARE required for docking. Only involved in homotypic vacuole fusion. Required for Ca(2+) efflux from the vacuolar lumen, a required signal for subsequent membrane fusion events, by inhibiting vacuolar Ca(2+)-ATPase PMC1 and promoting Ca(2+) release when forming trans-SNARE assemblies during the docking step. This Saccharomyces cerevisiae (strain ATCC 204508 / S288c) (Baker's yeast) protein is Vacuolar v-SNARE NYV1 (NYV1).